The chain runs to 61 residues: Short neurotoxin 1 (61 aa).

4 cysteine pairs are disulfide-bonded: C3-C23, C17-C40, C42-C53, and C54-C59.

Belongs to the three-finger toxin family. Short-chain subfamily. Type I alpha-neurotoxin sub-subfamily. In terms of tissue distribution, expressed by the venom gland.

Its subcellular location is the secreted. Its function is as follows. Binds to muscle nicotinic acetylcholine receptor (nAChR) and inhibit acetylcholine from binding to the receptor, thereby impairing neuromuscular transmission. In terms of biological role, produces peripheral paralysis by blocking neuromuscular transmission at the postsynaptic site. Binds to the muscular nicotinic acetylcholine receptor. This chain is Short neurotoxin 1, found in Naja annulifera (Banded Egyptian cobra).